We begin with the raw amino-acid sequence, 2968 residues long: Polyketide synthase 37 (2968 aa).

The Ketosynthase family 3 (KS3) domain occupies 32–454; that stretch reads KEPIAIIGIG…GSNSSLFLSS (423 aa). Catalysis depends on for beta-ketoacyl synthase activity residues Cys-198, His-338, and His-378. The segment at 624–950 is malonyl-CoA:ACP transacylase (MAT) domain; the sequence is FIFSGQGQQW…LSTLSKNSNS (327 aa). Ser-718 serves as the catalytic For malonyltransferase activity. An N-terminal hotdog fold region spans residues 1017–1157; the sequence is PPMFISLDRK…GIIKYGTNYL (141 aa). In terms of domain architecture, PKS/mFAS DH spans 1017 to 1350; it reads PPMFISLDRK…FKGINSSSSS (334 aa). Residues 1031–1345 form a dehydratase (DH) domain region; the sequence is TPSFEVRLNQ…LTNLEFKGIN (315 aa). The Proton acceptor; for dehydratase activity role is filled by His-1049. Residues 1183 to 1350 are C-terminal hotdog fold; that stretch reads FKSFNSNEFY…FKGINSSSSS (168 aa). Asp-1257 functions as the Proton donor; for dehydratase activity in the catalytic mechanism. A disordered region spans residues 1522-1547; that stretch reads SCGGGGGSTNNTISNSSSSISSIDNG. Over residues 1530–1547 the composition is skewed to low complexity; sequence TNNTISNSSSSISSIDNG. Residues 1718-2053 form an enoyl reductase (ER) domain region; sequence GIISDLKIKQ…SGNHIGKILI (336 aa). The segment at 2083-2277 is ketoreductase (KR) domain; that stretch reads TYIFTGFGGL…LKSSCIHLAS (195 aa). The segment at 2379–2400 is disordered; the sequence is GDGSFDDLNQLEDEGQQGFGNG. The Carrier domain occupies 2421–2498; it reads FDNDFYTKSI…STVELIKNKL (78 aa). Residue Ser-2458 is modified to O-(pantetheine 4'-phosphoryl)serine. A disordered region spans residues 2568 to 2589; it reads SSSSNNSNSKNELTSPPPSAKR. Positions 2707–2968 are chalcone synthase; the sequence is ISHVVGVTST…IEAILFKLIK (262 aa). Cys-2747 is an active-site residue.

Requires pantetheine 4'-phosphate as cofactor.

It carries out the reaction (E)-4-coumaroyl-CoA + 3 malonyl-CoA + 3 H(+) = 2',4,4',6'-tetrahydroxychalcone + 3 CO2 + 4 CoA. It catalyses the reaction hexanoyl-CoA + 3 malonyl-CoA + 3 H(+) = 2,4,6-trihydroxyphenylhexan-1-one + 3 CO2 + 4 CoA. It participates in secondary metabolite biosynthesis; flavonoid biosynthesis. Polyketide synthase; part of the gene cluster that mediates the biosynthesis of DIF-1 (Differentiation Inducing Factor-1), a signal molecule involved in the differentiation of pstO (prestalk-O) cells. The three-step process begins with the formation of (2,4,6-trihydroxyphenyl)-1-hexan-1-one (THPH) by the polyketide synthase StlB. THPH is then dichlorinated by the flavin-dependent halogenase ChlA. The last step of DIF-1 biosynthesis is the O-methylation of dichloro-THPH (or des-methyl-DIF-1) by the methyltransferase DmtA to yield DIF-1. The sequence is that of Polyketide synthase 37 (StlB) from Dictyostelium discoideum (Social amoeba).